The following is a 347-amino-acid chain: Protein RecA (347 aa).

68–75 (GPESSGKT) contributes to the ATP binding site.

It belongs to the RecA family.

Its subcellular location is the cytoplasm. Can catalyze the hydrolysis of ATP in the presence of single-stranded DNA, the ATP-dependent uptake of single-stranded DNA by duplex DNA, and the ATP-dependent hybridization of homologous single-stranded DNAs. It interacts with LexA causing its activation and leading to its autocatalytic cleavage. The protein is Protein RecA of Mycobacterium sp. (strain JLS).